Reading from the N-terminus, the 402-residue chain is MSLTGCLPPRPPCSMRRRTSGGGASVSPVVVMASTAGVGGIGNPTPRGKKPFAPWREVPPQVTHTLPPEKKEVFDSLEGWAADTILPYLKPVEESWQPQDHLPDPRSPSFGDEVAALRERAAGLPDDHLVCLVGDMVTEEALPTYQTMLNTMDGGVRDETGAGGSAWAVWTRAWAAEENRHGDLMNKYLYLTGRVDMRQVEKTIQYLIGSGMDPRTENDPYMGFIYTTFQERATSISHGNTARHAGRHGDAALARVCGTVAADEKRHEAAYAAIVAKLFEVDPDYTVRAFARMMRRKVAMPARLMYDGADDRLFARFAAVAQRLGVYTAADYAGIIEFLVARWGVPGLAAGLSGEGRRAQDFVCSLGPRFRRMEERAQEAAKRAPPAAAAPFSWIHGRQVQL.

Disordered regions lie at residues 1–25 (MSLT…GGAS) and 38–66 (VGGI…THTL). Residues 1–32 (MSLTGCLPPRPPCSMRRRTSGGGASVSPVVVM) constitute a chloroplast transit peptide. Positions 139, 178, 181, 231, 264, and 267 each coordinate Fe cation.

This sequence belongs to the fatty acid desaturase type 2 family. As to quaternary structure, homodimer. Fe(2+) is required as a cofactor.

Its subcellular location is the plastid. The protein resides in the chloroplast. The protein operates within lipid metabolism; fatty acid metabolism. Introduces a cis double bond in the acyl chain of an acyl-[acyl-carrier protein]. This Oryza sativa subsp. indica (Rice) protein is Acyl-[acyl-carrier-protein] desaturase 3, chloroplastic.